The sequence spans 298 residues: MFKSGFVAILGRPNVGKSTFLNHVMGQKIAIMSDKAQTTRNKIMGIYTTETEQIVFIDTPGIHKPKTALGDFMVESAYSTLREVETVLFMVPADEKRGKGDDMIIERLKAARIPVILVINKIDKVHPDQLLEQIDDFRSQMDFKEIVPISALQGNNVETLVQLLKDNLEEGFQYFPEDQITDHPERFLVSEMVREKVLHLTQQEVPHSVAVVVDSMKRDEVTDKVHIRVTIMVERDSQKGIIIGKQGAMLKKIGKLARRDIELMLGDKVYLETWVKVKKNWRDKKLDLADFGYNKKEY.

In terms of domain architecture, Era-type G spans 3 to 170 (KSGFVAILGR…VQLLKDNLEE (168 aa)). The segment at 11–18 (GRPNVGKS) is G1. 11–18 (GRPNVGKS) contacts GTP. The segment at 37 to 41 (QTTRN) is G2. Positions 58-61 (DTPG) are G3. GTP-binding positions include 58–62 (DTPGI) and 120–123 (NKID). Positions 120-123 (NKID) are G4. The tract at residues 149–151 (ISA) is G5. Residues 201–279 (TQQEVPHSVA…YLETWVKVKK (79 aa)) form the KH type-2 domain.

This sequence belongs to the TRAFAC class TrmE-Era-EngA-EngB-Septin-like GTPase superfamily. Era GTPase family. As to quaternary structure, monomer.

The protein resides in the cytoplasm. The protein localises to the cell membrane. In terms of biological role, an essential GTPase that binds both GDP and GTP, with rapid nucleotide exchange. Plays a role in 16S rRNA processing and 30S ribosomal subunit biogenesis and possibly also in cell cycle regulation and energy metabolism. The chain is GTPase Era from Streptococcus equi subsp. zooepidemicus (strain MGCS10565).